Consider the following 33-residue polypeptide: Potassium channel toxin alpha-KTx 24.1 (33 aa).

4 disulfides stabilise this stretch: C4–C23, C9–C28, C13–C30, and C18–C33.

The protein belongs to the short scorpion toxin superfamily. Potassium channel inhibitor family. Alpha-KTx 24 subfamily. Post-translationally, contains 4 disulfide bonds. As to expression, expressed by the venom gland.

The protein localises to the secreted. Reversibly blocks voltage-gated potassium channels Kv1.2/KCNA2, Kv1.3/KCNA3 and, weakly, Shaker B. This is Potassium channel toxin alpha-KTx 24.1 from Pandinus imperator (Emperor scorpion).